Here is a 468-residue protein sequence, read N- to C-terminus: Ribulose bisphosphate carboxylase large chain (468 aa).

K4 carries the post-translational modification N6,N6,N6-trimethyllysine. The substrate site is built by N113 and T163. K165 acts as the Proton acceptor in catalysis. Position 167 (K167) interacts with substrate. Mg(2+)-binding residues include K191, D193, and E194. The residue at position 191 (K191) is an N6-carboxylysine. H284 acts as the Proton acceptor in catalysis. Substrate is bound by residues R285, H317, and S369.

It belongs to the RuBisCO large chain family. Type I subfamily. In terms of assembly, heterohexadecamer of 8 large chains and 8 small chains; disulfide-linked. The disulfide link is formed within the large subunit homodimers. Mg(2+) serves as cofactor. In terms of processing, the disulfide bond which can form in the large chain dimeric partners within the hexadecamer appears to be associated with oxidative stress and protein turnover.

Its subcellular location is the plastid. It localises to the chloroplast. The enzyme catalyses 2 (2R)-3-phosphoglycerate + 2 H(+) = D-ribulose 1,5-bisphosphate + CO2 + H2O. It catalyses the reaction D-ribulose 1,5-bisphosphate + O2 = 2-phosphoglycolate + (2R)-3-phosphoglycerate + 2 H(+). Its function is as follows. RuBisCO catalyzes two reactions: the carboxylation of D-ribulose 1,5-bisphosphate, the primary event in carbon dioxide fixation, as well as the oxidative fragmentation of the pentose substrate in the photorespiration process. Both reactions occur simultaneously and in competition at the same active site. This chain is Ribulose bisphosphate carboxylase large chain, found in Pandorea jasminoides (Bower vine).